The primary structure comprises 178 residues: UPF0215 protein STK_03040 (178 aa).

The protein belongs to the UPF0215 family.

The sequence is that of UPF0215 protein STK_03040 from Sulfurisphaera tokodaii (strain DSM 16993 / JCM 10545 / NBRC 100140 / 7) (Sulfolobus tokodaii).